We begin with the raw amino-acid sequence, 396 residues long: Acetate kinase (396 aa).

N7 is a binding site for Mg(2+). An ATP-binding site is contributed by K14. R88 provides a ligand contact to substrate. The Proton donor/acceptor role is filled by D145. Residues 205-209, 279-281, and 327-331 each bind ATP; these read HLGNG, DFR, and GIGEN. E381 is a binding site for Mg(2+).

This sequence belongs to the acetokinase family. As to quaternary structure, homodimer. Mg(2+) serves as cofactor. The cofactor is Mn(2+).

Its subcellular location is the cytoplasm. It catalyses the reaction acetate + ATP = acetyl phosphate + ADP. Its pathway is metabolic intermediate biosynthesis; acetyl-CoA biosynthesis; acetyl-CoA from acetate: step 1/2. In terms of biological role, catalyzes the formation of acetyl phosphate from acetate and ATP. Can also catalyze the reverse reaction. The sequence is that of Acetate kinase from Campylobacter jejuni subsp. jejuni serotype O:23/36 (strain 81-176).